The primary structure comprises 444 residues: Adenine permease AdeQ (444 aa).

The Cytoplasmic portion of the chain corresponds to 1–29 (MNNDNTDYVSNESGTLSRLFKLPQHGTTV). The helical transmembrane segment at 30–53 (RTELIAGMTTFLTMVYIVFVNPQI) threads the bilayer. Over 54–63 (LGAAQMDPKV) the chain is Periplasmic. A helical membrane pass occupies residues 64–82 (VFVTTCLIAGIGSIAMGIF). The Cytoplasmic portion of the chain corresponds to 83 to 84 (AN). Residues 85-101 (LPVALAPAMGLNAFFAF) form a discontinuously helical membrane-spanning segment. At 102–113 (VVVGAMGISWQT) the chain is on the periplasmic side. The helical transmembrane segment at 114–133 (GMGAIFWGAVGLFLLTLFRI) threads the bilayer. The Cytoplasmic portion of the chain corresponds to 134–145 (RYWMISNIPLSL). The chain crosses the membrane as a helical span at residues 146-166 (RIGITSGIGLFIALMGLKNTG). Residues 167–182 (VIVANKDTLVMIGDLS) are Periplasmic-facing. The chain crosses the membrane as a helical span at residues 183-200 (SHGVLLGILGFFIITVLS). Topologically, residues 201 to 204 (SRHF) are cytoplasmic. The chain crosses the membrane as a helical span at residues 205 to 223 (HAAVLVSIVVTSCCGLFFG). Residues 224 to 251 (DVHFSGVYSIPPDISGVIGEVDLSGALT) lie on the Periplasmic side of the membrane. A helical membrane pass occupies residues 252–280 (LELAGIIFSFMLINLFDSSGTLIGVTDKA). The Cytoplasmic portion of the chain corresponds to 281–293 (GLIDGNGKFPNMN). A helical transmembrane segment spans residues 294–309 (KALYVDSVSSVAGAFI). The Periplasmic portion of the chain corresponds to 310–311 (GT). The chain crosses the membrane as a discontinuously helical span at residues 312–327 (SSVTAYIESTSGVAVG). Over 328 to 331 (GRTG) the chain is Cytoplasmic. The helical transmembrane segment at 332 to 346 (LTAVVVGVMFLLVMF) threads the bilayer. At 347 to 357 (FSPLVAIVPPY) the chain is on the periplasmic side. The helical transmembrane segment at 358 to 377 (ATAGALIFVGVLMTSSLARV) threads the bilayer. Over 378–382 (NWDDF) the chain is Cytoplasmic. An intramembrane region (discontinuously helical) is located at residues 383–418 (TESVPAFITTVMMPFTFSITEGIALGFMSYCIMKVC). Residues 419–444 (TGRWRDLNLCVVVVAALFALKIILVD) are Cytoplasmic-facing.

Belongs to the nucleobase:cation symporter-2 (NCS2) (TC 2.A.40) family. Azg-like subfamily.

Its subcellular location is the cell inner membrane. In terms of biological role, high-affinity transporter for adenine. This is Adenine permease AdeQ (adeQ) from Escherichia coli (strain K12).